Consider the following 228-residue polypeptide: Acyl-protein thioesterase 1 (228 aa).

Active-site charge relay system residues include serine 119, aspartate 174, and histidine 208.

It belongs to the AB hydrolase superfamily. AB hydrolase 2 family.

Its subcellular location is the cytoplasm. It is found in the nucleus. The catalysed reaction is S-hexadecanoyl-L-cysteinyl-[protein] + H2O = L-cysteinyl-[protein] + hexadecanoate + H(+). Its function is as follows. Hydrolyzes fatty acids from S-acylated cysteine residues in proteins with a strong preference for palmitoylated G-alpha proteins over other acyl substrates. Mediates the deacylation of G-alpha proteins such as GPA1 in vivo, but has weak or no activity toward palmitoylated Ras proteins. Has weak lysophospholipase activity in vitro; however such activity may not exist in vivo. In Kluyveromyces lactis (strain ATCC 8585 / CBS 2359 / DSM 70799 / NBRC 1267 / NRRL Y-1140 / WM37) (Yeast), this protein is Acyl-protein thioesterase 1.